A 307-amino-acid polypeptide reads, in one-letter code: Protein FAM76A (307 aa).

Disordered stretches follow at residues 142–195 (QRKH…ESIT) and 287–307 (KQAAALSKSKKSEKSGAITSP). Over residues 161-182 (SRLSGGSHYNSQKTLSTSSIQN) the composition is skewed to polar residues. Residues 217–299 (IIAQLKEEVA…AALSKSKKSE (83 aa)) adopt a coiled-coil conformation.

The protein belongs to the FAM76 family.

The sequence is that of Protein FAM76A (FAM76A) from Bos taurus (Bovine).